The chain runs to 365 residues: Protein Wnt-6 (365 aa).

The first 24 residues, 1–24, serve as a signal peptide directing secretion; that stretch reads MLPPLPSRLGLLLLLLLCPAHVGG. 11 cysteine pairs are disulfide-bonded: C76–C87, C124–C132, C134–C172, C222–C236, C224–C231, C294–C325, C310–C320, C324–C364, C340–C355, C342–C352, and C347–C348. N86 is a glycosylation site (N-linked (GlcNAc...) asparagine). Residues 140–158 show a composition bias toward pro residues; that stretch reads RAPPRPSGLPGTPGPPGPA. The tract at residues 140-164 is disordered; that stretch reads RAPPRPSGLPGTPGPPGPAGSPEGS. S228 carries the O-palmitoleoyl serine; by PORCN lipid modification. The N-linked (GlcNAc...) asparagine glycan is linked to N311.

It belongs to the Wnt family. In terms of assembly, interacts with PORCN. In terms of processing, palmitoleoylation is required for efficient binding to frizzled receptors. Depalmitoleoylation leads to Wnt signaling pathway inhibition. Expressed in gastric cancer cell lines and gastric cancer tissues (at protein level). Detected in the apical gland region of the gastric foveolar epithelium (at protein level).

Its subcellular location is the secreted. The protein localises to the extracellular space. It localises to the extracellular matrix. Functionally, ligand for members of the frizzled family of seven transmembrane receptors. Probable developmental protein. May be a signaling molecule which affects the development of discrete regions of tissues. Is likely to signal over only few cell diameters. Together with CAV1 may promote chemoresistance of gastric cancer cells to DNA-damaging anthracycline drugs through the activation of the canonical Wnt receptor signaling pathway. The protein is Protein Wnt-6 (WNT6) of Homo sapiens (Human).